Consider the following 892-residue polypeptide: Alpha-actinin-1 (892 aa).

At Met-1 the chain carries N-acetylmethionine. Positions 1–247 are actin-binding; it reads MDHYDSQQTN…IMTYVSSFYH (247 aa). Ser-6 carries the phosphoserine modification. A Phosphotyrosine; by FAK1 modification is found at Tyr-12. Calponin-homology (CH) domains lie at 31–135 and 144–250; these read KQQR…LRFA and TSAK…HAFS. N6-acetyllysine occurs at positions 95 and 195. Spectrin repeat units lie at residues 274-384, 394-499, 509-620, and 630-733; these read QLME…WLLN, HLAE…ALER, QLYL…ALTE, and RLRK…EVEN. Positions 274–733 are interaction with DDN; the sequence is QLMEDYEKLA…IARTINEVEN (460 aa). Ser-471 carries the post-translational modification Phosphoserine. Position 676 is an N6-acetyllysine (Lys-676). Residue Ser-677 is modified to Phosphoserine. 2 EF-hand domains span residues 746-781 and 787-822; these read EQMNEFRASFNHFDRDHSGTLGPEEFKACLISLGYD and QGEAEFARIMSIVDPNRLGVVTFQAFIDFMSRETAD. Residues Asp-759, Asp-761, Ser-763, Thr-765, and Glu-770 each coordinate Ca(2+). Residue Ser-890 is modified to Phosphoserine.

Belongs to the alpha-actinin family. In terms of assembly, homodimer; antiparallel. Interacts with MYOZ2, TTID and LPP. Interacts with DDN. Interacts with PSD. Interacts with MICALL2. Interacts with DNM2 and CTTN. Interacts with PDLIM1. Interacts with PDLIM2. Interacts with PDLIM4 (via PDZ domain). Interacts with IGSF8.

It is found in the cytoplasm. Its subcellular location is the cytoskeleton. It localises to the myofibril. The protein resides in the sarcomere. The protein localises to the z line. It is found in the cell membrane. Its subcellular location is the cell junction. It localises to the cell projection. The protein resides in the ruffle. Functionally, F-actin cross-linking protein which is thought to anchor actin to a variety of intracellular structures. Association with IGSF8 regulates the immune synapse formation and is required for efficient T-cell activation. This is Alpha-actinin-1 (ACTN1) from Macaca fascicularis (Crab-eating macaque).